The chain runs to 660 residues: tRNA 5-methylaminomethyl-2-thiouridine biosynthesis bifunctional protein MnmC (660 aa).

The interval 1 to 235 (MTITRHARID…KWEVLRGTFI (235 aa)) is tRNA (mnm(5)s(2)U34)-methyltransferase. Residues 266 to 660 (IGAGLAGCAT…LRGLIRGGGK (395 aa)) form an FAD-dependent cmnm(5)s(2)U34 oxidoreductase region.

This sequence in the N-terminal section; belongs to the methyltransferase superfamily. tRNA (mnm(5)s(2)U34)-methyltransferase family. The protein in the C-terminal section; belongs to the DAO family. The cofactor is FAD.

Its subcellular location is the cytoplasm. The catalysed reaction is 5-aminomethyl-2-thiouridine(34) in tRNA + S-adenosyl-L-methionine = 5-methylaminomethyl-2-thiouridine(34) in tRNA + S-adenosyl-L-homocysteine + H(+). Its function is as follows. Catalyzes the last two steps in the biosynthesis of 5-methylaminomethyl-2-thiouridine (mnm(5)s(2)U) at the wobble position (U34) in tRNA. Catalyzes the FAD-dependent demodification of cmnm(5)s(2)U34 to nm(5)s(2)U34, followed by the transfer of a methyl group from S-adenosyl-L-methionine to nm(5)s(2)U34, to form mnm(5)s(2)U34. The protein is tRNA 5-methylaminomethyl-2-thiouridine biosynthesis bifunctional protein MnmC of Pseudomonas savastanoi pv. phaseolicola (strain 1448A / Race 6) (Pseudomonas syringae pv. phaseolicola (strain 1448A / Race 6)).